The primary structure comprises 375 residues: Chaperone protein DnaJ (375 aa).

The 66-residue stretch at 5 to 70 (DYYEVLEISR…QKRQAYDRFG (66 aa)) folds into the J domain. The CR-type zinc-finger motif lies at 133-211 (GKEVTIQIPS…CHGHGRVRRN (79 aa)). Zn(2+)-binding residues include C146, C149, C163, C166, C185, C188, C199, and C202. CXXCXGXG motif repeat units follow at residues 146-153 (CEVCRGSG), 163-170 (CATCGGRG), 185-192 (CPQCNGSG), and 199-206 (CTNCHGHG).

Belongs to the DnaJ family. Homodimer. Zn(2+) serves as cofactor.

The protein localises to the cytoplasm. Participates actively in the response to hyperosmotic and heat shock by preventing the aggregation of stress-denatured proteins and by disaggregating proteins, also in an autonomous, DnaK-independent fashion. Unfolded proteins bind initially to DnaJ; upon interaction with the DnaJ-bound protein, DnaK hydrolyzes its bound ATP, resulting in the formation of a stable complex. GrpE releases ADP from DnaK; ATP binding to DnaK triggers the release of the substrate protein, thus completing the reaction cycle. Several rounds of ATP-dependent interactions between DnaJ, DnaK and GrpE are required for fully efficient folding. Also involved, together with DnaK and GrpE, in the DNA replication of plasmids through activation of initiation proteins. The sequence is that of Chaperone protein DnaJ from Acidithiobacillus ferrooxidans (strain ATCC 23270 / DSM 14882 / CIP 104768 / NCIMB 8455) (Ferrobacillus ferrooxidans (strain ATCC 23270)).